We begin with the raw amino-acid sequence, 446 residues long: Eukaryotic translation initiation factor 3 subunit E (446 aa).

A PCI domain is found at 256–425; that stretch reads TDLFFSPAYI…GTVIMNHPPQ (170 aa).

Belongs to the eIF-3 subunit E family. As to quaternary structure, component of the eukaryotic translation initiation factor 3 (eIF-3) complex.

It is found in the cytoplasm. Functionally, component of the eukaryotic translation initiation factor 3 (eIF-3) complex, which is involved in protein synthesis of a specialized repertoire of mRNAs and, together with other initiation factors, stimulates binding of mRNA and methionyl-tRNAi to the 40S ribosome. The eIF-3 complex specifically targets and initiates translation of a subset of mRNAs involved in cell proliferation. This is Eukaryotic translation initiation factor 3 subunit E (int6) from Aspergillus terreus (strain NIH 2624 / FGSC A1156).